The following is a 344-amino-acid chain: DNA-directed RNA polymerase subunit alpha (344 aa).

The tract at residues 1–238 (MKVIKTAPLI…KQLGVFGERP (238 aa)) is alpha N-terminal domain (alpha-NTD). The tract at residues 254–344 (AKDLSAKIES…EKLEDKGGND (91 aa)) is alpha C-terminal domain (alpha-CTD).

This sequence belongs to the RNA polymerase alpha chain family. As to quaternary structure, homodimer. The RNAP catalytic core consists of 2 alpha, 1 beta, 1 beta' and 1 omega subunit. When a sigma factor is associated with the core the holoenzyme is formed, which can initiate transcription.

The enzyme catalyses RNA(n) + a ribonucleoside 5'-triphosphate = RNA(n+1) + diphosphate. Functionally, DNA-dependent RNA polymerase catalyzes the transcription of DNA into RNA using the four ribonucleoside triphosphates as substrates. In Helicobacter pylori (strain ATCC 700392 / 26695) (Campylobacter pylori), this protein is DNA-directed RNA polymerase subunit alpha.